A 428-amino-acid polypeptide reads, in one-letter code: Gamma-glutamyl phosphate reductase (428 aa).

This sequence belongs to the gamma-glutamyl phosphate reductase family.

Its subcellular location is the cytoplasm. It carries out the reaction L-glutamate 5-semialdehyde + phosphate + NADP(+) = L-glutamyl 5-phosphate + NADPH + H(+). The protein operates within amino-acid biosynthesis; L-proline biosynthesis; L-glutamate 5-semialdehyde from L-glutamate: step 2/2. Its function is as follows. Catalyzes the NADPH-dependent reduction of L-glutamate 5-phosphate into L-glutamate 5-semialdehyde and phosphate. The product spontaneously undergoes cyclization to form 1-pyrroline-5-carboxylate. The sequence is that of Gamma-glutamyl phosphate reductase from Picosynechococcus sp. (strain ATCC 27264 / PCC 7002 / PR-6) (Agmenellum quadruplicatum).